Reading from the N-terminus, the 180-residue chain is MSGRINVVQGDITLIDVDVIVNAANPSLMGGGGVDGAIHRAAGPALLAACRQVRQQQGECQPGHAVITEAGDLAAKAVVHTVGPVWRGGQDNEPQLLADAYRNSLQLVAANGYNSVAFPAISTGIYGYPKAAAAQIAFETVSDYLTRHPQPKQVYFVCYDEENFLLYQRLLGQYDEQPGA.

Residues 1–175 (MSGRINVVQG…LYQRLLGQYD (175 aa)) enclose the Macro domain. Substrate-binding positions include 11–12 (DI), N25, 33–35 (GVD), and 122–126 (STGIY). Residue D35 is the Proton acceptor of the active site.

This sequence belongs to the MacroD-type family. YmdB subfamily. Homodimer. Interacts with RNase III.

The enzyme catalyses 3''-O-acetyl-ADP-D-ribose + H2O = ADP-D-ribose + acetate + H(+). It carries out the reaction 2''-O-acetyl-ADP-D-ribose + H2O = ADP-D-ribose + acetate + H(+). In terms of biological role, deacetylates O-acetyl-ADP ribose to yield ADP-ribose and free acetate. Down-regulates ribonuclease 3 (RNase III) activity. Acts by interacting directly with the region of the ribonuclease that is required for dimerization/activation. In Cronobacter sakazakii (strain ATCC BAA-894) (Enterobacter sakazakii), this protein is O-acetyl-ADP-ribose deacetylase.